Consider the following 892-residue polypeptide: Translation initiation factor IF-2 (892 aa).

Disordered stretches follow at residues 144–176 and 189–298; these read QQRLAEVDRQRVEEQERKRREEEQAELERQKTE and SNSV…SGAH. Residues 207-219 are compositionally biased toward low complexity; sequence LPRTVRPTPAARP. The tr-type G domain occupies 391–560; the sequence is PRPPVVTIMG…SIQAEVLELK (170 aa). Residues 400-407, 446-450, and 500-503 contribute to the GTP site; these read GHVDHGKT, DTPGH, and SKID.

It belongs to the TRAFAC class translation factor GTPase superfamily. Classic translation factor GTPase family. IF-2 subfamily.

It is found in the cytoplasm. One of the essential components for the initiation of protein synthesis. Protects formylmethionyl-tRNA from spontaneous hydrolysis and promotes its binding to the 30S ribosomal subunits. Also involved in the hydrolysis of GTP during the formation of the 70S ribosomal complex. This is Translation initiation factor IF-2 from Xylella fastidiosa (strain M12).